The sequence spans 502 residues: ATP synthase subunit alpha (502 aa).

A disordered region spans residues Val115–Gly135. Residue Gly169–Thr176 participates in ATP binding.

It belongs to the ATPase alpha/beta chains family. F-type ATPases have 2 components, CF(1) - the catalytic core - and CF(0) - the membrane proton channel. CF(1) has five subunits: alpha(3), beta(3), gamma(1), delta(1), epsilon(1). CF(0) has three main subunits: a(1), b(2) and c(9-12). The alpha and beta chains form an alternating ring which encloses part of the gamma chain. CF(1) is attached to CF(0) by a central stalk formed by the gamma and epsilon chains, while a peripheral stalk is formed by the delta and b chains.

The protein resides in the cell membrane. The enzyme catalyses ATP + H2O + 4 H(+)(in) = ADP + phosphate + 5 H(+)(out). Produces ATP from ADP in the presence of a proton gradient across the membrane. The alpha chain is a regulatory subunit. The protein is ATP synthase subunit alpha of Bacillus anthracis (strain A0248).